A 166-amino-acid polypeptide reads, in one-letter code: Signal peptidase complex catalytic subunit SEC11 (166 aa).

Residues 1–9 (MNIRQQITQ) are Cytoplasmic-facing. A helical; Signal-anchor for type II membrane protein transmembrane segment spans residues 10–30 (FLSLAYVFSSAFMLWKTLSVI). Over 31-166 (ANSHSPIVVV…LGLSSLFSNE (136 aa)) the chain is Lumenal. Catalysis depends on charge relay system residues Ser44, His83, and Asp108. Residues 152–163 (GMLGLLGLSSLF) form a C-terminal short (CTS) helix region.

Belongs to the peptidase S26B family. As to quaternary structure, component of the signal peptidase complex (SPC) composed of a catalytic subunit SEC11 and three accessory subunits SPC1, SPC2 and SPC3. The complex induces a local thinning of the ER membrane which is used to measure the length of the signal peptide (SP) h-region of protein substrates. This ensures the selectivity of the complex towards h-regions shorter than 18-20 amino acids. SPC associates with the translocon complex.

The protein resides in the endoplasmic reticulum membrane. The catalysed reaction is Cleavage of hydrophobic, N-terminal signal or leader sequences from secreted and periplasmic proteins.. In terms of biological role, catalytic component of the signal peptidase complex (SPC) which catalyzes the cleavage of N-terminal signal sequences from nascent proteins as they are translocated into the lumen of the endoplasmic reticulum. Specifically cleaves N-terminal signal peptides that contain a hydrophobic alpha-helix (h-region) shorter than 18-20 amino acids. The protein is Signal peptidase complex catalytic subunit SEC11 (SEC11) of Candida dubliniensis (strain CD36 / ATCC MYA-646 / CBS 7987 / NCPF 3949 / NRRL Y-17841) (Yeast).